Here is a 309-residue protein sequence, read N- to C-terminus: ATP synthase gamma chain (309 aa).

This sequence belongs to the ATPase gamma chain family. As to quaternary structure, F-type ATPases have 2 components, CF(1) - the catalytic core - and CF(0) - the membrane proton channel. CF(1) has five subunits: alpha(3), beta(3), gamma(1), delta(1), epsilon(1). CF(0) has three main subunits: a, b and c.

The protein localises to the cell membrane. Its function is as follows. Produces ATP from ADP in the presence of a proton gradient across the membrane. The gamma chain is believed to be important in regulating ATPase activity and the flow of protons through the CF(0) complex. This Mycolicibacterium gilvum (strain PYR-GCK) (Mycobacterium gilvum (strain PYR-GCK)) protein is ATP synthase gamma chain.